Here is a 1620-residue protein sequence, read N- to C-terminus: Probable serine/threonine-protein kinase gdt4 (1620 aa).

Positions 1-19 are cleaved as a signal peptide; it reads MKLEQRIFFLICLVINSFS. Residues 20 to 891 are Extracellular-facing; that stretch reads NCSLLVAPDG…EVIGINEQLN (872 aa). A helical membrane pass occupies residues 892-912; sequence ILAIVLPITISLFAAASILAG. The Cytoplasmic portion of the chain corresponds to 913-1620; that stretch reads YLVIKKYKKP…AKRNKKNQNQ (708 aa). The region spanning 1349–1604 is the Protein kinase domain; sequence IVLEKYLSEG…TLIDLLEKLL (256 aa). ATP contacts are provided by residues 1355–1363 and Lys-1376; that span reads LSEGSFGVV. Asp-1466 acts as the Proton acceptor in catalysis.

In the N-terminal section; belongs to the GDT family. It in the C-terminal section; belongs to the protein kinase superfamily. TKL Ser/Thr protein kinase family.

The protein resides in the membrane. It catalyses the reaction L-seryl-[protein] + ATP = O-phospho-L-seryl-[protein] + ADP + H(+). It carries out the reaction L-threonyl-[protein] + ATP = O-phospho-L-threonyl-[protein] + ADP + H(+). This is Probable serine/threonine-protein kinase gdt4 (gdt4) from Dictyostelium discoideum (Social amoeba).